The primary structure comprises 367 residues: Trans-enoyl reductase opdC (367 aa).

NADP(+) contacts are provided by residues 47–50, 199–202, Y217, 264–265, and 353–354; these read YDAK, SPHN, LD, and IT.

The protein belongs to the zinc-containing alcohol dehydrogenase family. Monomer.

The protein operates within secondary metabolite biosynthesis. Functionally, trans-enoyl reductase; part of the gene cluster that mediates the biosynthesis of oxopyrrolidines, polyketide-amino acid hybrid compounds with feature structures of tetramic acid. The polyketide chain is first assembled by the highly reducing PKS module of opdA using acetyl-CoA as the starter unit and five malonyl-CoA as the extender units. OpdC acts as a trans-acting enoyl reductase and reduces the terminal alkenyl to alkane. The 17R in oxopyrrolidine A and 15R, 17S in oxopyrrolidine B are generated by non-stereospecific catalysis of the ketoreductase (KR) domain and enoyl reductases. Then the polyketides with specific configurations are transferred to the NRPS module of opdA and linked to L-tyrosine to form an amide bond. Finally, the oxopyrrolidines are offloaded through a Dieckmann cyclization catalyzed by the terminal D domain to give a tetramic acid moiety. This chain is Trans-enoyl reductase opdC, found in Penicillium oxalicum (strain 114-2 / CGMCC 5302) (Penicillium decumbens).